The primary structure comprises 123 residues: Large ribosomal subunit protein uL14 (123 aa).

It belongs to the universal ribosomal protein uL14 family. In terms of assembly, part of the 50S ribosomal subunit. Forms a cluster with proteins L3 and L19. In the 70S ribosome, L14 and L19 interact and together make contacts with the 16S rRNA in bridges B5 and B8.

In terms of biological role, binds to 23S rRNA. Forms part of two intersubunit bridges in the 70S ribosome. The polypeptide is Large ribosomal subunit protein uL14 (Histophilus somni (strain 129Pt) (Haemophilus somnus)).